The following is a 613-amino-acid chain: Cilia- and flagella-associated protein 100 (613 aa).

The segment at 36–55 (KSKESKKNKGNVTISDRSSN) is disordered. Positions 45-55 (GNVTISDRSSN) are enriched in polar residues. Coiled-coil stretches lie at residues 167 to 198 (ALAMKRNEIQRLEMLATREENRLERAEKFLEK), 233 to 260 (VEIRELTAQITSIKSEISKFEDTLKHYK), 396 to 435 (FTKLEEENLSLIQNTQEMEETLDELNVTLKNTQIRMDKEV), and 504 to 580 (GTVQ…RGRK).

This sequence belongs to the CFAP100 family.

It is found in the cytoplasm. Its subcellular location is the cytoskeleton. It localises to the cilium axoneme. Functionally, may play a role in ciliary/flagellar motility by regulating the assembly and the activity of axonemal inner dynein arm. The sequence is that of Cilia- and flagella-associated protein 100 from Mus musculus (Mouse).